We begin with the raw amino-acid sequence, 355 residues long: tRNA pseudouridine synthase D (355 aa).

Asp-84 serves as the catalytic Nucleophile. The TRUD domain occupies 160–306 (GVPNYFGLQR…MAHERRILRL (147 aa)).

The protein belongs to the pseudouridine synthase TruD family.

The catalysed reaction is uridine(13) in tRNA = pseudouridine(13) in tRNA. Its function is as follows. Responsible for synthesis of pseudouridine from uracil-13 in transfer RNAs. This is tRNA pseudouridine synthase D from Pseudomonas aeruginosa (strain UCBPP-PA14).